Consider the following 323-residue polypeptide: Thiamine-monophosphate kinase (323 aa).

Residues Asp30, Ser45, Thr46, and Asp47 each contribute to the Mg(2+) site. Residue His54 participates in substrate binding. Mg(2+) is bound by residues Asp75 and Asp122. ATP-binding positions include Gly121–Asp122 and Arg146. Asp212 serves as a coordination point for Mg(2+). Ser214 provides a ligand contact to ATP. Position 215 (Asp215) interacts with Mg(2+). Positions 263 and 319 each coordinate substrate.

This sequence belongs to the thiamine-monophosphate kinase family.

It catalyses the reaction thiamine phosphate + ATP = thiamine diphosphate + ADP. It participates in cofactor biosynthesis; thiamine diphosphate biosynthesis; thiamine diphosphate from thiamine phosphate: step 1/1. Catalyzes the ATP-dependent phosphorylation of thiamine-monophosphate (TMP) to form thiamine-pyrophosphate (TPP), the active form of vitamin B1. The protein is Thiamine-monophosphate kinase of Buchnera aphidicola subsp. Schizaphis graminum (strain Sg).